A 202-amino-acid polypeptide reads, in one-letter code: LexA repressor (202 aa).

The H-T-H motif DNA-binding region spans 28-48 (RAEIAMRLGFRSPNAAEEHLK). Catalysis depends on for autocatalytic cleavage activity residues S119 and K156.

The protein belongs to the peptidase S24 family. In terms of assembly, homodimer.

It catalyses the reaction Hydrolysis of Ala-|-Gly bond in repressor LexA.. In terms of biological role, represses a number of genes involved in the response to DNA damage (SOS response), including recA and lexA. Binds to the 16 bp palindromic sequence 5'-CTGTATATATATACAG-3'. In the presence of single-stranded DNA, RecA interacts with LexA causing an autocatalytic cleavage which disrupts the DNA-binding part of LexA, leading to derepression of the SOS regulon and eventually DNA repair. The polypeptide is LexA repressor (Serratia proteamaculans (strain 568)).